Consider the following 303-residue polypeptide: B1 kinase (303 aa).

It belongs to the protein kinase superfamily. Ser/Thr protein kinase family. Poxviruses subfamily. As to quaternary structure, interacts with host JIP1; this interaction increases the amount of MAPK bound to JIP1 and subsequently increases the activity of transcription factors, such as JUN, that respond to these complexes. Interacts with protein OPG198; this interaction inhibits the repressive activity of OPG198 pseudokinase on viral replication factory formation. Requires Mg(2+) as cofactor. Autophosphorylated.

It is found in the virion. The protein resides in the host cytoplasm. The enzyme catalyses L-seryl-[protein] + ATP = O-phospho-L-seryl-[protein] + ADP + H(+). It carries out the reaction L-threonyl-[protein] + ATP = O-phospho-L-threonyl-[protein] + ADP + H(+). Functionally, essential serine/threonine-protein kinase that plays different role in the viral life cycle. Phosphorylates the host small ribosomal protein RACK1 thereby customizing the ribosomes to a state optimal for viral mRNAs (which contain poly-A leaders) but not for host mRNAs. Facilitates viral DNA replication by inhibiting host BANF1, a cellular host defense responsive to foreign DNA. Phosphorylates host BANF1 on serine and threonine residues; this leads to BANF1 relocalization to the cytoplasm, loss of dimerization and impaired DNA binding activity. Indeed, BANF1 activity depends on its DNA-binding property which is blocked by VPK1-mediated phosphorylation. Required for viral intermediate genes expression, probably by inhibiting host BANF1. Modulates cellular responses via host JUN by two different mechanisms, either by direct phosphorylation or by modulation of upstream JIP1-MAPK complexes. Seems to participate in the accumulation/processing of late proteins and thus in virion maturation. In addition, inhibits B12 repressive activity on viral DNA replication via a phosphorylation-dependent mechanism. The chain is B1 kinase (OPG187) from Cynomys gunnisoni (Gunnison's prairie dog).